We begin with the raw amino-acid sequence, 620 residues long: Chaperone protein DnaK (620 aa).

The residue at position 197 (Thr-197) is a Phosphothreonine; by autocatalysis. The tract at residues 597–620 (AMANKNNAEQPKKKDDDVIDAEVE) is disordered.

It belongs to the heat shock protein 70 family.

Acts as a chaperone. The chain is Chaperone protein DnaK from Helicobacter pylori (strain Shi470).